A 518-amino-acid polypeptide reads, in one-letter code: Nitrogenase iron-iron protein alpha chain (518 aa).

The [8Fe-7S] cluster site is built by cysteine 49 and cysteine 75. [8Fe-9S-C-homocitryl] cluster is bound by residues cysteine 257 and histidine 423.

In terms of assembly, hexamer of two alpha, two beta, and two delta chains. Requires [8Fe-7S] cluster as cofactor. The cofactor is [8Fe-9S-C-homocitryl] cluster.

It carries out the reaction N2 + 8 reduced [2Fe-2S]-[ferredoxin] + 16 ATP + 16 H2O = H2 + 8 oxidized [2Fe-2S]-[ferredoxin] + 2 NH4(+) + 16 ADP + 16 phosphate + 6 H(+). Functionally, this iron-iron protein is part of the nitrogenase complex that catalyzes the key enzymatic reactions in nitrogen fixation. Other nitrogenase complexes utilize a molybdenum-iron protein or a vanadium-iron protein. The polypeptide is Nitrogenase iron-iron protein alpha chain (anfD) (Ruminiclostridium hungatei (Clostridium hungatei)).